We begin with the raw amino-acid sequence, 185 residues long: GTP cyclohydrolase 1 (185 aa).

Zn(2+) contacts are provided by Cys75, His78, and Cys146.

The protein belongs to the GTP cyclohydrolase I family. Toroid-shaped homodecamer, composed of two pentamers of five dimers.

It catalyses the reaction GTP + H2O = 7,8-dihydroneopterin 3'-triphosphate + formate + H(+). It participates in cofactor biosynthesis; 7,8-dihydroneopterin triphosphate biosynthesis; 7,8-dihydroneopterin triphosphate from GTP: step 1/1. This chain is GTP cyclohydrolase 1, found in Methylococcus capsulatus (strain ATCC 33009 / NCIMB 11132 / Bath).